Here is a 382-residue protein sequence, read N- to C-terminus: 1-deoxy-D-xylulose 5-phosphate reductoisomerase (382 aa).

NADPH is bound by residues T10, G11, S12, I13, G36, and N122. 1-deoxy-D-xylulose 5-phosphate is bound at residue K123. Residue E124 participates in NADPH binding. D148 lines the Mn(2+) pocket. 1-deoxy-D-xylulose 5-phosphate-binding residues include S149, E150, S174, and H197. Residue E150 coordinates Mn(2+). Position 203 (G203) interacts with NADPH. The 1-deoxy-D-xylulose 5-phosphate site is built by S210, N215, K216, and E219. E219 serves as a coordination point for Mn(2+).

Belongs to the DXR family. Mg(2+) serves as cofactor. Requires Mn(2+) as cofactor.

The catalysed reaction is 2-C-methyl-D-erythritol 4-phosphate + NADP(+) = 1-deoxy-D-xylulose 5-phosphate + NADPH + H(+). It participates in isoprenoid biosynthesis; isopentenyl diphosphate biosynthesis via DXP pathway; isopentenyl diphosphate from 1-deoxy-D-xylulose 5-phosphate: step 1/6. Catalyzes the NADPH-dependent rearrangement and reduction of 1-deoxy-D-xylulose-5-phosphate (DXP) to 2-C-methyl-D-erythritol 4-phosphate (MEP). This is 1-deoxy-D-xylulose 5-phosphate reductoisomerase from Prosthecochloris aestuarii (strain DSM 271 / SK 413).